The primary structure comprises 374 residues: Aminodeoxychorismate lyase (374 aa).

The protein belongs to the class-IV pyridoxal-phosphate-dependent aminotransferase family. Homodimer. Pyridoxal 5'-phosphate is required as a cofactor.

The protein resides in the cytoplasm. The enzyme catalyses 4-amino-4-deoxychorismate = 4-aminobenzoate + pyruvate + H(+). It functions in the pathway cofactor biosynthesis; tetrahydrofolate biosynthesis; 4-aminobenzoate from chorismate: step 2/2. In terms of biological role, converts 4-amino-4-deoxychorismate into 4-aminobenzoate (PABA) and pyruvate. This is Aminodeoxychorismate lyase (ABZ2) from Saccharomyces cerevisiae (strain ATCC 204508 / S288c) (Baker's yeast).